The following is a 404-amino-acid chain: Lupus La protein homolog (404 aa).

The HTH La-type RNA-binding domain maps to 7-99; the sequence is NEKMAALEAK…RRSPSKPLPE (93 aa). Phosphoserine occurs at positions 92 and 94. The 77-residue stretch at 111–187 folds into the RRM domain; the sequence is RSVYIKGFPT…TDLLILFKED (77 aa). Lysine 116 bears the N6-acetyllysine mark. Threonine 120 bears the Phosphothreonine mark. The residue at position 128 (lysine 128) is an N6-acetyllysine. The residue at position 225 (serine 225) is a Phosphoserine. The 122-residue stretch at 227–348 folds into the xRRM domain; the sequence is EEKIGCLLKF…KGKGNKAAQA (122 aa). N6-acetyllysine is present on residues lysine 328 and lysine 341. The span at 329-342 shows a compositional bias: basic residues; sequence WKSKGRRFKGKGKG. The segment at 329 to 404 is disordered; that stretch reads WKSKGRRFKG…QKTENGAGDQ (76 aa). Positions 343–354 are enriched in low complexity; the sequence is NKAAQAGSAKGK. Position 360 is an N6-acetyllysine (lysine 360). Residue threonine 362 is modified to Phosphothreonine. Serine 366 bears the Phosphoserine mark. The segment covering 381 to 391 has biased composition (basic and acidic residues); that stretch reads RAREETDKEPP.

Interacts with DDX15. May interact with RUFY1. Post-translationally, phosphorylated in the C-terminal part of the protein.

It is found in the nucleus. Its function is as follows. Binds to the 3' poly(U) terminus of nascent RNA polymerase III transcripts, protecting them from exonuclease digestion and facilitating their folding and maturation. This is Lupus La protein homolog (SSB) from Bos taurus (Bovine).